Reading from the N-terminus, the 511-residue chain is MAEPSVESSSPGGSATSEDHEFDPSADMLVHDFDDERTLEEEEMMEGETNFSSEIEDLAREGDMPIHELLSLYGYDSTVRLPEEEEEEEEEEEGEDDEDADNDDNSGCSGENKEENIKDSSGQEDETQSSNDDPSQSVTSQDAQEIIRPRRCKYFDTNSEIEEESEEDEDYIPSEDWKKEIMVGSMFQAEIPVGVCRYKENEKVYENDDQLLWDPECLPEEKVVVFLKDASRRTGDEKGVEAIPEGSHIKDNEQALYELVKCSFDTEEALRRLRFNVKAAREELSVWTEEECRNFEQGLKAYGKDFHLIQANKVRTRSVGECVAFYYMWKKSERYDFFAQQTRFGKKKYNLHPGVTDYMDRLLDESESAASSRAPSPPPTASNSSNSQSEKEDGAVSSRNQNGVSSNGPGEILNKEEVKVEGLHVNGPTGGNKKPLLTDMDTNGYEANNLTTDPKLAHMTARNENDFDEKNERPAKRRRINSSGKESPGSSEFFQEAVSHGKFEEHENTND.

Over residues 1-16 (MAEPSVESSSPGGSAT) the composition is skewed to low complexity. The tract at residues 1 to 171 (MAEPSVESSS…EEESEEDEDY (171 aa)) is disordered. S10 bears the Phosphoserine mark. The segment covering 17–36 (SEDHEFDPSADMLVHDFDDE) has biased composition (basic and acidic residues). Acidic residues predominate over residues 37–46 (RTLEEEEMME). The span at 57–66 (DLAREGDMPI) shows a compositional bias: basic and acidic residues. The span at 83–104 (EEEEEEEEEEEGEDDEDADNDD) shows a compositional bias: acidic residues. Residues 128 to 143 (QSSNDDPSQSVTSQDA) show a composition bias toward polar residues. S140 carries the post-translational modification Phosphoserine. Y154 carries the phosphotyrosine modification. 2 positions are modified to phosphoserine: S159 and S165. A compositionally biased stretch (acidic residues) spans 159–171 (SEIEEESEEDEDY). In terms of domain architecture, ELM2 spans 179–277 (KEIMVGSMFQ…EALRRLRFNV (99 aa)). A Glycyl lysine isopeptide (Lys-Gly) (interchain with G-Cter in SUMO2) cross-link involves residue K238. One can recognise an SANT domain in the interval 282-334 (EELSVWTEEECRNFEQGLKAYGKDFHLIQANKVRTRSVGECVAFYYMWKKSER). The segment at 365 to 511 (ESESAASSRA…KFEEHENTND (147 aa)) is disordered. Residues S366, S368, and S376 each carry the phosphoserine modification. A compositionally biased stretch (polar residues) spans 397 to 408 (SSRNQNGVSSNG). 2 stretches are compositionally biased toward basic and acidic residues: residues 413–422 (LNKEEVKVEG) and 461–474 (ARNE…NERP). Residue K419 forms a Glycyl lysine isopeptide (Lys-Gly) (interchain with G-Cter in SUMO2) linkage. Residues 481–493 (NSSGKESPGSSEF) are compositionally biased toward polar residues. A phosphoserine mark is found at S482, S487, and S490. Positions 499 to 511 (SHGKFEEHENTND) are enriched in basic and acidic residues.

As to quaternary structure, interacts with HDAC1. Part of a complex containing at least CDYL, MIER1, MIER2, HDAC1 and HDAC2. As to expression, ubiquitously expressed. Isoform 1 is only expressed in testis.

The protein resides in the nucleus. Its function is as follows. Transcriptional repressor regulating the expression of a number of genes including SP1 target genes. Probably functions through recruitment of HDAC1 a histone deacetylase involved in chromatin silencing. This chain is Mesoderm induction early response protein 1 (Mier1), found in Mus musculus (Mouse).